A 786-amino-acid polypeptide reads, in one-letter code: Leucine-rich repeat extensin-like protein 2 (786 aa).

The signal sequence occupies residues 1–28 (MLLFPSTSLRLFFFLFLLFSSCFLQIRG). Asn-73 and Asn-79 each carry an N-linked (GlcNAc...) asparagine glycan. LRR repeat units lie at residues 100 to 124 (TRVVAGIDLNHADMAGYLPRELGLL), 125 to 147 (TDLALFHLNSNRFCGEVPLTFKH), 149 to 172 (KLLFELDLSNNRFVGKFPNVVLSL), 173 to 196 (PSLKFLDLRYNEFEGSIPSKLFDK), 198 to 219 (LDAIFLNHNRFMFGIPENMGNS), 221 to 243 (VSALVLADNDLGGCIPGSIGLMG), 244 to 267 (KTLNEIILSNDNLTGCLPPQIGNL), 268 to 291 (KNVTVFDISFNRLSGPLPSSIGNM), and 292 to 315 (KSLEQLNVANNRFTGVIPSSICQL). N-linked (GlcNAc...) asparagine glycosylation is found at Asn-255 and Asn-269. Asn-320 and Asn-346 each carry an N-linked (GlcNAc...) asparagine glycan. Disordered stretches follow at residues 352 to 372 (IDGKEDQRSSKECSSPASRSV), 390 to 589 (FKMS…YYAV), 624 to 645 (PPVYYSPVTQSPPPPPPVYYPP), and 694 to 786 (PPPS…IPYY). The segment covering 353–362 (DGKEDQRSSK) has biased composition (basic and acidic residues). The tract at residues 384–786 (SPPPPSFKMS…SPPPPSIPYY (403 aa)) is contains the Ser-Pro(4) repeats. 3 stretches are compositionally biased toward pro residues: residues 460–477 (YPPPPPPPEYEPSPPPPS), 487–542 (YPPP…PPPK), and 566–589 (SPPPPTYYATQSPPPPPPPTYYAV). Pro residues-rich tracts occupy residues 694 to 713 (PPPSPVYYPPVTQSPPPPST), 720 to 737 (PASPNQSPPPEYQSPPPK), 752 to 769 (PTPPSLPPPYYEDTPLPP), and 777 to 786 (SPPPPSIPYY).

Hydroxylated on proline residues in the S-P-P-P-P repeat. Post-translationally, O-glycosylated on hydroxyprolines. As to expression, mostly expressed in roots, also present in stems at low levels. In roots, confined to differentiation zones, the collet, and meristematic cells of tips.

It localises to the secreted. It is found in the cell wall. Functionally, modulates cell morphogenesis by regulating cell wall formation and assembly, and/or growth polarization. Together with LRX2, component of the extracellular mechanism regulating root hair morphogenesis and elongation. This chain is Leucine-rich repeat extensin-like protein 2 (LRX2), found in Arabidopsis thaliana (Mouse-ear cress).